The sequence spans 210 residues: N-(5'-phosphoribosyl)anthranilate isomerase (210 aa).

It belongs to the TrpF family.

The enzyme catalyses N-(5-phospho-beta-D-ribosyl)anthranilate = 1-(2-carboxyphenylamino)-1-deoxy-D-ribulose 5-phosphate. It functions in the pathway amino-acid biosynthesis; L-tryptophan biosynthesis; L-tryptophan from chorismate: step 3/5. This Staphylococcus aureus (strain Mu3 / ATCC 700698) protein is N-(5'-phosphoribosyl)anthranilate isomerase.